The following is a 312-amino-acid chain: Taste receptor type 2 member 135 (312 aa).

The Extracellular segment spans residues methionine 1–threonine 19. A helical transmembrane segment spans residues leucine 20–isoleucine 40. Over alanine 41–arginine 66 the chain is Cytoplasmic. The chain crosses the membrane as a helical span at residues phenylalanine 67 to phenylalanine 87. Topologically, residues proline 88 to asparagine 97 are extracellular. The helical transmembrane segment at leucine 98 to tyrosine 118 threads the bilayer. Residues cysteine 119–tryptophan 140 are Cytoplasmic-facing. A helical membrane pass occupies residues valine 141–isoleucine 161. The Extracellular portion of the chain corresponds to glycine 162–lysine 198. N-linked (GlcNAc...) asparagine glycosylation is present at asparagine 179. The helical transmembrane segment at isoleucine 199–serine 219 threads the bilayer. Residues leucine 220–lysine 244 are Cytoplasmic-facing. Residues alanine 245–leucine 265 form a helical membrane-spanning segment. The Extracellular portion of the chain corresponds to serine 266–arginine 277. The chain crosses the membrane as a helical span at residues tyrosine 278 to phenylalanine 298. Over serine 299 to cysteine 312 the chain is Cytoplasmic.

It belongs to the G-protein coupled receptor T2R family.

The protein localises to the membrane. Functionally, putative taste receptor which may play a role in the perception of bitterness. In Mus musculus (Mouse), this protein is Taste receptor type 2 member 135 (Tas2r135).